Reading from the N-terminus, the 373-residue chain is Alanine dehydrogenase (373 aa).

Residues R15 and K75 each coordinate substrate. The active-site Proton donor/acceptor is H96. Residues S134, 178-179 (IV), D198, S220, 239-240 (VL), 267-270 (VAID), R280, and 299-302 (VANI) contribute to the NAD(+) site. The Proton donor/acceptor role is filled by D270.

This sequence belongs to the AlaDH/PNT family. As to quaternary structure, homohexamer. Trimer of dimer.

The protein localises to the cytoplasm. It catalyses the reaction L-alanine + NAD(+) + H2O = pyruvate + NH4(+) + NADH + H(+). Its pathway is amino-acid degradation; L-alanine degradation via dehydrogenase pathway; NH(3) and pyruvate from L-alanine: step 1/1. Functionally, catalyzes the reversible reductive amination of pyruvate to L-alanine. This enzyme is a key factor in the assimilation of L-alanine as an energy source through the tricarboxylic acid cycle. The sequence is that of Alanine dehydrogenase from Methanococcus maripaludis (strain DSM 14266 / JCM 13030 / NBRC 101832 / S2 / LL).